The primary structure comprises 424 residues: Calreticulin (424 aa).

The signal sequence occupies residues 1–19 (MRLLLCLIFLVFVFNFALS). A disulfide bridge links cysteine 105 with cysteine 137. The an alpha-D-glucoside site is built by tyrosine 109, lysine 111, tyrosine 128, and aspartate 135. A run of 7 repeats spans residues 191–202 (IQAGNLADDWEL), 210–221 (DPKQSKPVDWVD), 227–238 (DPEDVKPAGHDD), 246–256 (PEAVKPEDWNE), 260–270 (GEWEAPTIANP), 274–284 (GEWKAKKIPNP), and 288–298 (GEWVHPLIDNP). Residues 191-256 (IQAGNLADDW…EAVKPEDWNE (66 aa)) form a 4 X 12 AA approximate repeats region. The tract at residues 260-298 (GEWEAPTIANPEYKGEWKAKKIPNPEYKGEWVHPLIDNP) is 3 X 11 AA approximate repeats. Glutamate 318 contacts an alpha-D-glucoside. Residues 370–385 (RKKADEKLAAEKAAEK) are compositionally biased toward basic and acidic residues. Residues 370–424 (RKKADEKLAAEKAAEKEAEEADEEEEEVAEEDLVKTDDKKEEVKKSTKKVDHDEL) form a disordered region. Residues 386-400 (EAEEADEEEEEVAEE) show a composition bias toward acidic residues. The span at 401–424 (DLVKTDDKKEEVKKSTKKVDHDEL) shows a compositional bias: basic and acidic residues. The Prevents secretion from ER motif lies at 421–424 (HDEL).

Belongs to the calreticulin family.

Its subcellular location is the endoplasmic reticulum lumen. Molecular calcium-binding chaperone promoting folding, oligomeric assembly and quality control in the ER via the calreticulin/calnexin cycle. This lectin may interact transiently with almost all of the monoglucosylated glycoproteins that are synthesized in the ER. This chain is Calreticulin (crtA), found in Dictyostelium discoideum (Social amoeba).